Consider the following 112-residue polypeptide: Small ribosomal subunit protein bS6 (112 aa).

This sequence belongs to the bacterial ribosomal protein bS6 family.

Binds together with bS18 to 16S ribosomal RNA. In Chlamydia abortus (strain DSM 27085 / S26/3) (Chlamydophila abortus), this protein is Small ribosomal subunit protein bS6.